The chain runs to 122 residues: Large ribosomal subunit protein uL14c (122 aa).

It belongs to the universal ribosomal protein uL14 family. Part of the 50S ribosomal subunit.

It localises to the plastid. The protein resides in the chloroplast. In terms of biological role, binds to 23S rRNA. The protein is Large ribosomal subunit protein uL14c of Lepidium virginicum (Virginia pepperweed).